Reading from the N-terminus, the 661-residue chain is UvrABC system protein C (661 aa).

One can recognise a GIY-YIG domain in the interval 52 to 130 (HKPGVYRMVD…IKRLHPRFNV (79 aa)). One can recognise a UVR domain in the interval 240 to 275 (QSIKNDMVQAMHKAAKNFDFEQAAAYRDRLSALSHI).

The protein belongs to the UvrC family. As to quaternary structure, interacts with UvrB in an incision complex.

Its subcellular location is the cytoplasm. In terms of biological role, the UvrABC repair system catalyzes the recognition and processing of DNA lesions. UvrC both incises the 5' and 3' sides of the lesion. The N-terminal half is responsible for the 3' incision and the C-terminal half is responsible for the 5' incision. The sequence is that of UvrABC system protein C from Bartonella henselae (strain ATCC 49882 / DSM 28221 / CCUG 30454 / Houston 1) (Rochalimaea henselae).